We begin with the raw amino-acid sequence, 526 residues long: ATP synthase subunit alpha (526 aa).

ATP is bound at residue 171-178; that stretch reads GDRQTGKT.

It belongs to the ATPase alpha/beta chains family. F-type ATPases have 2 components, CF(1) - the catalytic core - and CF(0) - the membrane proton channel. CF(1) has five subunits: alpha(3), beta(3), gamma(1), delta(1), epsilon(1). CF(0) has three main subunits: a(1), b(2) and c(9-12). The alpha and beta chains form an alternating ring which encloses part of the gamma chain. CF(1) is attached to CF(0) by a central stalk formed by the gamma and epsilon chains, while a peripheral stalk is formed by the delta and b chains.

It localises to the cell membrane. It carries out the reaction ATP + H2O + 4 H(+)(in) = ADP + phosphate + 5 H(+)(out). In terms of biological role, produces ATP from ADP in the presence of a proton gradient across the membrane. The alpha chain is a regulatory subunit. This chain is ATP synthase subunit alpha, found in Christiangramia forsetii (strain DSM 17595 / CGMCC 1.15422 / KT0803) (Gramella forsetii).